A 416-amino-acid polypeptide reads, in one-letter code: Adipocyte plasma membrane-associated protein (416 aa).

Residues 1–32 are disordered; sequence MSEADGLRQRRPLRPQVVTDDDGQAPEAKDGS. At Ser-2 the chain carries N-acetylserine. Topologically, residues 2 to 40 are cytoplasmic; sequence SEADGLRQRRPLRPQVVTDDDGQAPEAKDGSSFSGRVFR. Thr-19 carries the phosphothreonine modification. A helical; Signal-anchor for type II membrane protein transmembrane segment spans residues 41–61; that stretch reads VTFLMLAVSLTVPLLGAMMLL. At 62 to 416 the chain is on the extracellular side; the sequence is ESPIDPQPLS…FLCRLSLQAV (355 aa). N-linked (GlcNAc...) asparagine glycans are attached at residues Asn-160 and Asn-196.

It belongs to the strictosidine synthase family. As to expression, liver, glomerular and tubular structures of the kidney, endothelial cells, arterial wall and pancreatic islets of Langerhans (at protein level). Found ubiquitously in adult as well as in embryonic tissues. In adult tissue, the highest expression is found in the liver, placenta and heart. Found on the cell surface of monocytes. In embryonic tissue, the highest expression levels is found in the liver and the kidney.

The protein localises to the membrane. Its function is as follows. Exhibits strong arylesterase activity with beta-naphthyl acetate and phenyl acetate. May play a role in adipocyte differentiation. The polypeptide is Adipocyte plasma membrane-associated protein (APMAP) (Homo sapiens (Human)).